The chain runs to 250 residues: Sperm-egg fusion protein Juno (250 aa).

An N-terminal signal peptide occupies residues 1-19; the sequence is MACWWPLLLELWTVMPTWA. Intrachain disulfides connect Cys27/Cys55, Cys47/Cys95, Cys56/Cys99, Cys79/Cys172, Cys86/Cys143, Cys132/Cys206, Cys136/Cys186, and Cys149/Cys166. The interval 62 to 81 is important for interaction with IZUMO1; the sequence is WEAHLDVSPLYNFSLFHCGL. N-linked (GlcNAc...) asparagine glycosylation is present at Asn73. Ser228 is lipidated: GPI-anchor amidated serine. The propeptide occupies 229–250; that stretch reads SAPSWELSYTIMVCSLFLPFLS.

Belongs to the folate receptor family. Monomer. Interacts with IZUMO1; the interaction is direct. IZUMO1 and IZUMO1R/JUNO form a complex with 1:1 stoichiometry. Interacts with FCRL3/MAIA; FCRL3/MAIA replaces IZUMO1R/JUNO as IZUMO1 receptor after sperm-egg adhesion, thereby permitting species-specific gamete fusion. Interacts with WDR54. Post-translationally, the protein is rapidly cleaved following fertilization, being only weakly detectable in zona-intact fertilized eggs at telophase II and undetectable at the pronuclear stage. Sheding is probably required to block to polyspermy and ensuring egg fusion with a single sperm. In terms of tissue distribution, expressed in unfertilized oocytes (at protein level).

It localises to the cell membrane. It is found in the cell projection. Its subcellular location is the microvillus membrane. Receptor for IZUMO1 present at the cell surface of oocytes (oolemma), which is essential for species-specific gamete recognition and fertilization. The IZUMO1:IZUMO1R/JUNO interaction is a necessary adhesion event between sperm and egg that is required for fertilization but is not sufficient for cell fusion. The ligand-receptor interaction probably does not act as a membrane 'fusogen'. Does not bind folate. The polypeptide is Sperm-egg fusion protein Juno (Homo sapiens (Human)).